The primary structure comprises 274 residues: Diaminopimelate epimerase (274 aa).

Substrate contacts are provided by Asn11, Gln44, and Asn64. Cys73 acts as the Proton donor in catalysis. Substrate-binding positions include 74 to 75 (GN), Asn157, Asn190, and 208 to 209 (ER). Cys217 functions as the Proton acceptor in the catalytic mechanism. 218–219 (GS) lines the substrate pocket.

Belongs to the diaminopimelate epimerase family. As to quaternary structure, homodimer (Potential). Previously DapF has been proposed to be a monomer, however it seems that it adopts a dimeric structure.

It localises to the cytoplasm. The catalysed reaction is (2S,6S)-2,6-diaminopimelate = meso-2,6-diaminopimelate. The protein operates within amino-acid biosynthesis; L-lysine biosynthesis via DAP pathway; DL-2,6-diaminopimelate from LL-2,6-diaminopimelate: step 1/1. Its activity is regulated as follows. Inhibited by LL-aziridino (LL-AziDAP), DL-aziridino (DL-AziDAP). Also inhibited by (2S,3R,6S)-2,6-diamino-3-fluoropimelate (L,L-3-fluoro-DAP) and (2R,3S,6S)-2,6-diamino-3-fluoropimelate (D,L-3-fluoro-DAP). Its function is as follows. Catalyzes the stereoinversion of LL-2,6-diaminopimelate (L,L-DAP) to meso-diaminopimelate (meso-DAP), a precursor of L-lysine and an essential component of the bacterial peptidoglycan. Only accepts DAP isomers with the L configuration. This is Diaminopimelate epimerase from Haemophilus influenzae (strain ATCC 51907 / DSM 11121 / KW20 / Rd).